Here is a 339-residue protein sequence, read N- to C-terminus: D-alanine--D-alanine ligase (339 aa).

The ATP-grasp domain maps to 126–333 (KQVLASVGMP…YSELVTRLVE (208 aa)). ATP is bound at residue 158–213 (AGELGYPLFVKPANLGSSVGISKVSGPGELERALDLAFSLGRRVILEAMTAHKPRE). Residues Asp-286, Glu-300, and Asn-302 each coordinate Mg(2+).

The protein belongs to the D-alanine--D-alanine ligase family. It depends on Mg(2+) as a cofactor. The cofactor is Mn(2+).

The protein resides in the cytoplasm. The enzyme catalyses 2 D-alanine + ATP = D-alanyl-D-alanine + ADP + phosphate + H(+). It participates in cell wall biogenesis; peptidoglycan biosynthesis. Cell wall formation. The protein is D-alanine--D-alanine ligase of Deinococcus geothermalis (strain DSM 11300 / CIP 105573 / AG-3a).